The chain runs to 194 residues: dCTP deaminase, dUMP-forming (194 aa).

DCTP contacts are provided by residues 105-110 (RSSMGR), D123, 131-133 (TLE), Q152, Y166, K174, and Q178. The active-site Proton donor/acceptor is the E133.

This sequence belongs to the dCTP deaminase family. In terms of assembly, homotrimer.

It catalyses the reaction dCTP + 2 H2O = dUMP + NH4(+) + diphosphate. It participates in pyrimidine metabolism; dUMP biosynthesis; dUMP from dCTP: step 1/1. Bifunctional enzyme that catalyzes both the deamination of dCTP to dUTP and the hydrolysis of dUTP to dUMP without releasing the toxic dUTP intermediate. This chain is dCTP deaminase, dUMP-forming, found in Methanobrevibacter smithii (strain ATCC 35061 / DSM 861 / OCM 144 / PS).